The chain runs to 151 residues: MNRKEIENLINSYHWMVKEVRRLQRVLYGSVIPMKNWGVAQYGLEATMPKGSPGKSQAELRQMDMREERLFKRLKYYEERVYAVELGAEKIHGEQHKVIYDCMMEGMSYRAISLHLGISRETVRKMKDEFISQLCQDCHFERLLNLKKSVV.

This sequence to B.subtilis pcf and to sigma factors.

This is an uncharacterized protein from Bacillus subtilis (strain 168).